A 338-amino-acid chain; its full sequence is D-erythrose-4-phosphate dehydrogenase (338 aa).

Position 12–13 (12–13 (RI)) interacts with NAD(+). Residues 154-156 (SCT), Arg200, 213-214 (TK), and Arg236 contribute to the substrate site. Cys155 (nucleophile) is an active-site residue. Residue Asn318 coordinates NAD(+).

This sequence belongs to the glyceraldehyde-3-phosphate dehydrogenase family. Epd subfamily. As to quaternary structure, homotetramer.

The protein localises to the cytoplasm. It catalyses the reaction D-erythrose 4-phosphate + NAD(+) + H2O = 4-phospho-D-erythronate + NADH + 2 H(+). The protein operates within cofactor biosynthesis; pyridoxine 5'-phosphate biosynthesis; pyridoxine 5'-phosphate from D-erythrose 4-phosphate: step 1/5. Catalyzes the NAD-dependent conversion of D-erythrose 4-phosphate to 4-phosphoerythronate. The polypeptide is D-erythrose-4-phosphate dehydrogenase (Yersinia pestis bv. Antiqua (strain Antiqua)).